A 112-amino-acid polypeptide reads, in one-letter code: uncharacterized protein (112 aa).

Helical transmembrane passes span 33–53 (PSPLLLSLLLHYTVLFSPFGA), 58–78 (LYIYIYIYIYIYIYMCINVCT), and 91–111 (CVYVCTHFNIYIHTYIYLLFV).

It localises to the membrane. This is an uncharacterized protein from Saccharomyces cerevisiae (strain ATCC 204508 / S288c) (Baker's yeast).